Consider the following 238-residue polypeptide: Orotidine 5'-phosphate decarboxylase (238 aa).

Residues D18, K40, 67-76 (DMKLLDIDNT), T122, R183, Q192, and R213 contribute to the substrate site. K69 acts as the Proton donor in catalysis.

It belongs to the OMP decarboxylase family. Type 1 subfamily. In terms of assembly, homodimer.

The catalysed reaction is orotidine 5'-phosphate + H(+) = UMP + CO2. The protein operates within pyrimidine metabolism; UMP biosynthesis via de novo pathway; UMP from orotate: step 2/2. Catalyzes the decarboxylation of orotidine 5'-monophosphate (OMP) to uridine 5'-monophosphate (UMP). This chain is Orotidine 5'-phosphate decarboxylase, found in Brucella abortus (strain S19).